Consider the following 636-residue polypeptide: Polyadenylate-binding protein 1 (636 aa).

At M1 the chain carries N-acetylmethionine. RRM domains are found at residues 11–89 (ASLY…WSQR), 99–175 (GNIF…RFKS), 191–268 (TNVY…RAQK), and 294–370 (VNLY…LAQR). Positions 166 to 289 (RKVFVGRFKS…FEQMKQDRIT (124 aa)) are CSDE1-binding. Residue K299 is modified to N6-methyllysine. S315 bears the Phosphoserine mark. T319 carries the phosphothreonine modification. Omega-N-methylarginine occurs at positions 385, 419, 432, and 436. An omega-N-methylated arginine; by CARM1 mark is found at R455 and R460. R475 and R481 each carry omega-N-methylarginine. Residue R493 is modified to Asymmetric dimethylarginine; alternate. R493 is subject to Dimethylated arginine; alternate. Position 493 is an omega-N-methylarginine; alternate (R493). R506 carries the post-translational modification Omega-N-methylarginine. K512 carries the N6-acetyllysine modification. Residue R518 is modified to Omega-N-methylarginine. The PABC domain maps to 542 to 619 (QEPLTASMLA…AVAVLQAHQA (78 aa)).

This sequence belongs to the polyadenylate-binding protein type-1 family. In terms of assembly, may form homodimers. Component of a multisubunit autoregulatory ribonucleoprotein complex (ARC), at least composed of IGF2BP1, PABPC1 and CSDE1. Directly interacts with IGF2BP1. Part of a complex associated with the FOS mCRD domain and consisting of HNRPD, SYNCRIP, PAIP1 and CSDE1/UNR. Interacts with PAIP1 and PAIP2 (via the PABPC1-interacting motifs PAM1 and PAM2). Interacts with PAIP1 with a 1:1 stoichiometry and with PAIP2 with a 1:2 stoichiometry. The interaction with CSDE1 is direct and RNA-independent. Found in a mRNP complex with YBX2. Interacts with TENT2/GLD2. Identified in the spliceosome C complex. Identified in a mRNP complex, at least composed of DHX9, DDX3X, ELAVL1, HNRNPU, IGF2BP1, ILF3, PABPC1, PCBP2, PTBP2, STAU1, STAU2, SYNCRIP and YBX1. The interaction with DDX3X is direct and RNA-independent. This interaction increases in stressed cells and decreases during cell recovery. Identified in a IGF2BP1-dependent mRNP granule complex containing untranslated mRNAs. Interacts with NXF1/TAP. Interacts with PIWIL1. Interacts with AGO1, AGO2, GSPT1 and GSPT2. Interacts with LARP4B. Interacts (via the second and third RRM domains and the C-terminus) with PAIP2B (via central acidic portion and C-terminus). Forms a complex with LARP1 and SHFL. Interacts with LARP4. Interacts with ZFC3H1 in a RNase-sensitive manner. Interacts with TRIM71 (via NHL repeats) in an RNA-dependent manner. Interacts with TENT5C; the interaction has no effect on TENT5C poly(A) polymerase function. Interacts with G3BP1 and G3BP2. Interacts with ENDOV; the interaction is RNA-dependent and stimulates ENDOV activity. Interacts with UPF1; the interaction is RNA-dependent. Interacts with IGF2BP2 and IGF2BP3. May interact with SETX. Interacts with RBM46. Interacts with PAN3. Post-translationally, phosphorylated by MAPKAPK2. Methylated by CARM1. Arg-493 is dimethylated, probably to asymmetric dimethylarginine.

It localises to the cytoplasm. It is found in the stress granule. Its subcellular location is the nucleus. The protein localises to the cell projection. The protein resides in the lamellipodium. Functionally, binds the poly(A) tail of mRNA, including that of its own transcript, and regulates processes of mRNA metabolism such as pre-mRNA splicing and mRNA stability. Its function in translational initiation regulation can either be enhanced by PAIP1 or repressed by PAIP2. Can probably bind to cytoplasmic RNA sequences other than poly(A) in vivo. Binds to N6-methyladenosine (m6A)-containing mRNAs and contributes to MYC stability by binding to m6A-containing MYC mRNAs. Involved in translationally coupled mRNA turnover. Implicated with other RNA-binding proteins in the cytoplasmic deadenylation/translational and decay interplay of the FOS mRNA mediated by the major coding-region determinant of instability (mCRD) domain. Involved in regulation of nonsense-mediated decay (NMD) of mRNAs containing premature stop codons; for the recognition of premature termination codons (PTC) and initiation of NMD a competitive interaction between UPF1 and PABPC1 with the ribosome-bound release factors is proposed. By binding to long poly(A) tails, may protect them from uridylation by ZCCHC6/ZCCHC11 and hence contribute to mRNA stability. The chain is Polyadenylate-binding protein 1 (PABPC1) from Pongo abelii (Sumatran orangutan).